Consider the following 83-residue polypeptide: uncharacterized protein (83 aa).

The chain crosses the membrane as a helical span at residues 50-70; it reads IMVFLGEAWIILIPFAIFCII.

This sequence belongs to the plectrovirus ORF7 family.

The protein resides in the host membrane. This is an uncharacterized protein from Spiroplasma melliferum (SpV1).